Here is a 133-residue protein sequence, read N- to C-terminus: ATP synthase epsilon chain, chloroplastic (133 aa).

The protein belongs to the ATPase epsilon chain family. As to quaternary structure, F-type ATPases have 2 components, CF(1) - the catalytic core - and CF(0) - the membrane proton channel. CF(1) has five subunits: alpha(3), beta(3), gamma(1), delta(1), epsilon(1). CF(0) has three main subunits: a, b and c.

The protein localises to the plastid. It is found in the chloroplast thylakoid membrane. Produces ATP from ADP in the presence of a proton gradient across the membrane. This is ATP synthase epsilon chain, chloroplastic from Mesostigma viride (Green alga).